We begin with the raw amino-acid sequence, 369 residues long: Phospho-N-acetylmuramoyl-pentapeptide-transferase (369 aa).

Transmembrane regions (helical) follow at residues 30-50, 74-94, 97-117, 136-156, 177-197, 208-228, 244-264, 272-292, 297-317, and 346-366; these read LAIF…IRWM, GTPT…TLLW, LSNP…LLGF, IRLA…IVFA, YFVD…VGAA, GLAT…AYLV, GVGE…GFLW, IFMG…VAVA, IVLA…IIQV, and TVVI…LATL.

The protein belongs to the glycosyltransferase 4 family. MraY subfamily. It depends on Mg(2+) as a cofactor.

It localises to the cell inner membrane. The enzyme catalyses UDP-N-acetyl-alpha-D-muramoyl-L-alanyl-gamma-D-glutamyl-meso-2,6-diaminopimeloyl-D-alanyl-D-alanine + di-trans,octa-cis-undecaprenyl phosphate = di-trans,octa-cis-undecaprenyl diphospho-N-acetyl-alpha-D-muramoyl-L-alanyl-D-glutamyl-meso-2,6-diaminopimeloyl-D-alanyl-D-alanine + UMP. Its pathway is cell wall biogenesis; peptidoglycan biosynthesis. In terms of biological role, catalyzes the initial step of the lipid cycle reactions in the biosynthesis of the cell wall peptidoglycan: transfers peptidoglycan precursor phospho-MurNAc-pentapeptide from UDP-MurNAc-pentapeptide onto the lipid carrier undecaprenyl phosphate, yielding undecaprenyl-pyrophosphoryl-MurNAc-pentapeptide, known as lipid I. The polypeptide is Phospho-N-acetylmuramoyl-pentapeptide-transferase (Phenylobacterium zucineum (strain HLK1)).